The chain runs to 96 residues: Small ribosomal subunit protein bS16 (96 aa).

This sequence belongs to the bacterial ribosomal protein bS16 family.

The sequence is that of Small ribosomal subunit protein bS16 from Oenococcus oeni (strain ATCC BAA-331 / PSU-1).